The following is a 389-amino-acid chain: Glutaryl-CoA dehydrogenase (389 aa).

2 residues coordinate substrate: Arg87 and Asn91. FAD is bound by residues 126–129 (FGIT), Ser135, and 159–161 (WIS). Ser135 lines the substrate pocket. Ser181 provides a ligand contact to substrate. FAD is bound by residues Arg271, 281 to 284 (FQMN), Arg340, Ala344, and 367 to 371 (EGSAN). The active-site Proton acceptor is Glu367. Arg385 is a binding site for substrate.

This sequence belongs to the acyl-CoA dehydrogenase family. Homotetramer. It depends on FAD as a cofactor.

The catalysed reaction is glutaryl-CoA + A = (2E)-glutaconyl-CoA + AH2. Its pathway is aromatic compound metabolism; benzoyl-CoA degradation. With respect to regulation, inhibited by glutaconyl-CoA. Catalyzes the dehydrogenation of Glutaryl-CoA to glutaconyl-CoA. The chain is Glutaryl-CoA dehydrogenase (Acd) from Desulfococcus multivorans.